A 167-amino-acid polypeptide reads, in one-letter code: MITLIIFSFLSFLLGIILSFTAYKFRSQEDPIVAIVNELLPQSQCAQCGYSGCYPYAKAIVENSEKINKCIPGGTDLISAISSVLSIEVPEKNLIITHKKQKNNTVLINESNCVGCSKCASFCPVDAIVGAPNFIHTVLQEFCTGCNICLLHCPTNCIEIKKETYEE.

Positions 1 to 22 (MITLIIFSFLSFLLGIILSFTA) are hydrophobic. Residues 28-87 (QEDPIVAIVNELLPQSQCAQCGYSGCYPYAKAIVENSEKINKCIPGGTDLISAISSVLSI) form the 4Fe-4S domain. Residues cysteine 45, cysteine 48, cysteine 53, cysteine 70, cysteine 113, cysteine 116, cysteine 119, cysteine 123, cysteine 143, cysteine 146, cysteine 149, and cysteine 153 each contribute to the [4Fe-4S] cluster site. 2 4Fe-4S ferredoxin-type domains span residues 104–133 (NTVL…GAPN) and 134–163 (FIHT…IKKE).

The protein belongs to the 4Fe4S bacterial-type ferredoxin family. RnfB subfamily. The complex is composed of six subunits: RnfA, RnfB, RnfC, RnfD, RnfE and RnfG. The cofactor is [4Fe-4S] cluster.

It is found in the cell inner membrane. Its function is as follows. Part of a membrane-bound complex that couples electron transfer with translocation of ions across the membrane. This chain is Ion-translocating oxidoreductase complex subunit B, found in Buchnera aphidicola subsp. Acyrthosiphon pisum (strain 5A).